A 310-amino-acid chain; its full sequence is Isoflavone reductase homolog A622 (310 aa).

NADP(+) contacts are provided by residues Gly13–Gly19, Arg38, and Lys47. Catalysis depends on Lys135, which acts as the Proton acceptor. Arg139 serves as a coordination point for NADP(+).

It belongs to the NmrA-type oxidoreductase family. Isoflavone reductase subfamily. As to quaternary structure, monomer. Expressed in roots and stems.

The protein localises to the cytoplasm. It functions in the pathway alkaloid biosynthesis; nicotine biosynthesis. In terms of biological role, NADPH-binding protein. Involved in the biosynthesis of pyridine alkaloid natural products, leading mainly to the production of anabasine, anatabine, nicotine and nornicotine, effective deterrents against herbivores with antiparasitic and pesticide properties (neurotoxins); nornicotine serves as the precursor in the synthesis of the carcinogen compound N'-nitrosonornicotine (NNN). Reductase involved in a late step of tobacco alkaloid biosynthesis. Triggers either the formation of a nicotinic acid-derived precursor or the final condensation reaction of tobacco alkaloids. The protein is Isoflavone reductase homolog A622 of Nicotiana sylvestris (Wood tobacco).